The sequence spans 84 residues: Small ribosomal subunit protein uS17 (84 aa).

It belongs to the universal ribosomal protein uS17 family. As to quaternary structure, part of the 30S ribosomal subunit.

In terms of biological role, one of the primary rRNA binding proteins, it binds specifically to the 5'-end of 16S ribosomal RNA. This is Small ribosomal subunit protein uS17 from Vibrio vulnificus (strain CMCP6).